Reading from the N-terminus, the 102-residue chain is Small ribosomal subunit protein uS10 (102 aa).

Belongs to the universal ribosomal protein uS10 family. As to quaternary structure, part of the 30S ribosomal subunit.

Its function is as follows. Involved in the binding of tRNA to the ribosomes. In Geotalea daltonii (strain DSM 22248 / JCM 15807 / FRC-32) (Geobacter daltonii), this protein is Small ribosomal subunit protein uS10.